Consider the following 757-residue polypeptide: Subtilisin-like protease SBT1.7 (757 aa).

Positions 1-24 (MSSSFLSSTAFFLLLCLGFCHVSS) are cleaved as a signal peptide. Positions 25 to 106 (SSSDQGTYIV…VLPEHRYELH (82 aa)) are excised as a propeptide. One can recognise an Inhibitor I9 domain in the interval 31-106 (TYIVHMAKSQ…VLPEHRYELH (76 aa)). Positions 102–610 (RYELHTTRTP…AGHVSPTTAT (509 aa)) constitute a Peptidase S8 domain. D139 functions as the Charge relay system in the catalytic mechanism. N170 carries N-linked (GlcNAc...) asparagine glycosylation. A disordered region spans residues 196–219 (PIDESKESRSPRDDDGHGTHTSST). Basic and acidic residues predominate over residues 198-213 (DESKESRSPRDDDGHG). Catalysis depends on H212, which acts as the Charge relay system. N352, N376, and N379 each carry an N-linked (GlcNAc...) asparagine glycan. The Charge relay system role is filled by S542. 2 N-linked (GlcNAc...) asparagine glycosylation sites follow: N631 and N644.

It belongs to the peptidase S8 family. In terms of tissue distribution, expressed in immature siliques and at lower levels in stems and flowers. Widely expressed at low levels.

It localises to the secreted. Its subcellular location is the cell wall. Activated by calcium. Inhibited by the serine protease inhibitors 4-(2-aminoethyl)benzenesulphonyl fluoride (AEBSF), PMSF, di-isopropyl phosphofluoridate (DFP) and soybean trypsin inhibitor (SBTI). Not inhibited by benzamidine or iodoacetamide. Leupeptin and pepstatin A have a minor inhibitory action. Functionally, serine protease. Has a substrate preference for the hydrophobic residues Phe and Ala and the basic residue Asp in the P1 position, and for Asp, Leu or Ala in the P1' position. Essential for mucilage release from seed coats. Triggers the accumulation and/or activation of cell wall modifying enzymes necessary either for the loosening of the outer primary cell wall, or to facilitate swelling of the mucilage. This chain is Subtilisin-like protease SBT1.7, found in Arabidopsis thaliana (Mouse-ear cress).